The chain runs to 389 residues: Protein OSCP1 (389 aa).

As to expression, expressed predominantly in testis, also found in placenta and to a lesser extent in thymus and small intestine; abundantly expressed in tumor-derived cell lines. Ubiquitously expressed.

It is found in the basal cell membrane. Functionally, may be involved in drug clearance in the placenta. The sequence is that of Protein OSCP1 (OSCP1) from Homo sapiens (Human).